A 354-amino-acid polypeptide reads, in one-letter code: Ferredoxin--NADP reductase 2 (354 aa).

The FAD site is built by threonine 14, aspartate 33, glutamine 41, tyrosine 46, alanine 86, phenylalanine 121, aspartate 289, and threonine 330.

It belongs to the ferredoxin--NADP reductase type 2 family. As to quaternary structure, homodimer. Requires FAD as cofactor.

The enzyme catalyses 2 reduced [2Fe-2S]-[ferredoxin] + NADP(+) + H(+) = 2 oxidized [2Fe-2S]-[ferredoxin] + NADPH. In Christiangramia forsetii (strain DSM 17595 / CGMCC 1.15422 / KT0803) (Gramella forsetii), this protein is Ferredoxin--NADP reductase 2.